A 540-amino-acid chain; its full sequence is Transcription termination/antitermination protein NusA (540 aa).

Residues 144 to 214 (GQVIEARVED…SMWPITLSRS (71 aa)) enclose the S1 motif domain. The KH domain occupies 319–386 (DTSIEIVVPA…QGIFGIKKRR (68 aa)). Residues 457 to 540 (VAAPTPTPAP…KQTFDNFDDL (84 aa)) are disordered. Over residues 461–489 (TPTPAPQPTPAPTKVEPVPPPVSVTPKPI) the composition is skewed to pro residues. Over residues 512 to 522 (DDSKTKPEKSS) the composition is skewed to basic and acidic residues. Polar residues predominate over residues 523 to 540 (AKTNTPQTKQTFDNFDDL).

It belongs to the NusA family. As to quaternary structure, monomer. Binds directly to the core enzyme of the DNA-dependent RNA polymerase and to nascent RNA.

Its subcellular location is the cytoplasm. In terms of biological role, participates in both transcription termination and antitermination. The sequence is that of Transcription termination/antitermination protein NusA from Mycoplasma pneumoniae (strain ATCC 29342 / M129 / Subtype 1) (Mycoplasmoides pneumoniae).